The chain runs to 1097 residues: DNA-directed RNA polymerase subunit beta (1097 aa).

The disordered stretch occupies residues 1073 to 1097 (DVNPRRSTPSRPTYESLGVADYDED).

It belongs to the RNA polymerase beta chain family. In cyanobacteria the RNAP catalytic core is composed of 2 alpha, 1 beta, 1 beta', 1 gamma and 1 omega subunit. When a sigma factor is associated with the core the holoenzyme is formed, which can initiate transcription.

It carries out the reaction RNA(n) + a ribonucleoside 5'-triphosphate = RNA(n+1) + diphosphate. Functionally, DNA-dependent RNA polymerase catalyzes the transcription of DNA into RNA using the four ribonucleoside triphosphates as substrates. The protein is DNA-directed RNA polymerase subunit beta of Synechococcus sp. (strain RCC307).